The chain runs to 466 residues: tRNA dimethylallyltransferase 2 (466 aa).

Position 27–34 (27–34 (GPTGSGKS)) interacts with ATP. 29-34 (TGSGKS) is a binding site for substrate. The interaction with substrate tRNA stretch occupies residues 52 to 55 (DAMQ). Positions 433-466 (WEHHKQGRTHRKRTTRHKNSQTYKNREVQEAEVN) are disordered. Residues 437 to 451 (KQGRTHRKRTTRHKN) are compositionally biased toward basic residues. Basic and acidic residues predominate over residues 456–466 (KNREVQEAEVN).

This sequence belongs to the IPP transferase family. Mg(2+) is required as a cofactor. As to expression, expressed ubiquitously, with highest expression in proliferating tissues.

Its subcellular location is the cytoplasm. It carries out the reaction adenosine(37) in tRNA + dimethylallyl diphosphate = N(6)-dimethylallyladenosine(37) in tRNA + diphosphate. Its function is as follows. Catalyzes the transfer of a dimethylallyl group onto the adenine at position 37 in tRNAs that read codons beginning with uridine, leading to the formation of N6-(dimethylallyl)adenosine (i(6)A). Involved in the cis-type cytokinin biosynthesis. This Arabidopsis thaliana (Mouse-ear cress) protein is tRNA dimethylallyltransferase 2 (IPT2).